Consider the following 173-residue polypeptide: ATP-dependent protease subunit HslV (173 aa).

Residue Thr-2 is part of the active site. The Na(+) site is built by Gly-158, Asp-161, and Ser-164.

It belongs to the peptidase T1B family. HslV subfamily. As to quaternary structure, a double ring-shaped homohexamer of HslV is capped on each side by a ring-shaped HslU homohexamer. The assembly of the HslU/HslV complex is dependent on binding of ATP.

It localises to the cytoplasm. The catalysed reaction is ATP-dependent cleavage of peptide bonds with broad specificity.. Its activity is regulated as follows. Allosterically activated by HslU binding. Protease subunit of a proteasome-like degradation complex believed to be a general protein degrading machinery. The polypeptide is ATP-dependent protease subunit HslV (Actinobacillus pleuropneumoniae serotype 5b (strain L20)).